We begin with the raw amino-acid sequence, 211 residues long: Large ribosomal subunit protein uL3 (211 aa).

Gln150 is modified (N5-methylglutamine).

It belongs to the universal ribosomal protein uL3 family. Part of the 50S ribosomal subunit. Forms a cluster with proteins L14 and L19. In terms of processing, methylated by PrmB.

Functionally, one of the primary rRNA binding proteins, it binds directly near the 3'-end of the 23S rRNA, where it nucleates assembly of the 50S subunit. The sequence is that of Large ribosomal subunit protein uL3 from Pseudomonas syringae pv. syringae (strain B728a).